Reading from the N-terminus, the 271-residue chain is 4-diphosphocytidyl-2-C-methyl-D-erythritol kinase (271 aa).

The active site involves lysine 8. ATP is bound at residue 90–100 (PFGAGLGGGSA). The active site involves aspartate 132.

The protein belongs to the GHMP kinase family. IspE subfamily.

The enzyme catalyses 4-CDP-2-C-methyl-D-erythritol + ATP = 4-CDP-2-C-methyl-D-erythritol 2-phosphate + ADP + H(+). It functions in the pathway isoprenoid biosynthesis; isopentenyl diphosphate biosynthesis via DXP pathway; isopentenyl diphosphate from 1-deoxy-D-xylulose 5-phosphate: step 3/6. Functionally, catalyzes the phosphorylation of the position 2 hydroxy group of 4-diphosphocytidyl-2C-methyl-D-erythritol. This Parabacteroides distasonis (strain ATCC 8503 / DSM 20701 / CIP 104284 / JCM 5825 / NCTC 11152) protein is 4-diphosphocytidyl-2-C-methyl-D-erythritol kinase.